We begin with the raw amino-acid sequence, 217 residues long: Adenylate kinase (217 aa).

Residue 10 to 15 coordinates ATP; sequence GAGKGT. Positions 30 to 59 are NMP; sequence STGDILRAAVSEMTPMGVKAKGYMESGALV. AMP-binding positions include Thr-31, Arg-36, 57–59, 85–88, and Gln-92; these read ALV and GFPR. The LID stretch occupies residues 126 to 163; sequence GRRTCRLCGKGYHVVFDPPRVSGRCDECLGELFQRDDD. Arg-127 is an ATP binding site. Residues Cys-130, Cys-133, Cys-150, and Cys-153 each coordinate Zn(2+). AMP is bound by residues Arg-160 and Arg-171. Gly-199 serves as a coordination point for ATP.

This sequence belongs to the adenylate kinase family. Monomer.

It localises to the cytoplasm. The catalysed reaction is AMP + ATP = 2 ADP. Its pathway is purine metabolism; AMP biosynthesis via salvage pathway; AMP from ADP: step 1/1. Its function is as follows. Catalyzes the reversible transfer of the terminal phosphate group between ATP and AMP. Plays an important role in cellular energy homeostasis and in adenine nucleotide metabolism. The sequence is that of Adenylate kinase from Geotalea uraniireducens (strain Rf4) (Geobacter uraniireducens).